The following is a 412-amino-acid chain: Peptidase T (412 aa).

Histidine 84 is a binding site for Zn(2+). Aspartate 86 is an active-site residue. Position 146 (aspartate 146) interacts with Zn(2+). Catalysis depends on glutamate 179, which acts as the Proton acceptor. Zn(2+) is bound by residues glutamate 180, aspartate 202, and histidine 385.

This sequence belongs to the peptidase M20B family. Zn(2+) is required as a cofactor.

It is found in the cytoplasm. The enzyme catalyses Release of the N-terminal residue from a tripeptide.. Cleaves the N-terminal amino acid of tripeptides. This chain is Peptidase T, found in Haemophilus influenzae (strain PittGG).